A 592-amino-acid polypeptide reads, in one-letter code: Bifunctional purine biosynthesis protein ATIC (592 aa).

Met-1 bears the N-acetylmethionine mark. The region spanning 1–146 (MAPGHLALFS…KNHARVTVVC (146 aa)) is the MGS-like domain. Positions 1–198 (MAPGHLALFS…ISDYFRKQYS (198 aa)) are IMP cyclohydrolase. IMP-binding positions include 12–14 (SDK), 34–37 (SGGT), 64–67 (RVKT), 101–102 (CN), and 125–126 (DI). Lys-137 acts as the Proton donor/acceptor; for FAICAR cyclization activity in catalysis. N6-acetyllysine is present on Lys-199. Residues 199–592 (KGISQMPLRY…AHTNLRLFHH (394 aa)) are AICAR formyltransferase. Residues 207-208 (RY), His-267, Gly-316, Asp-339, Asn-431, and Arg-451 contribute to the 5-amino-1-(5-phospho-beta-D-ribosyl)imidazole-4-carboxamide site. Catalysis depends on His-267, which acts as the Proton acceptor; for AICAR formyltransferase activity. Position 452 (Ile-452) interacts with (6R)-10-formyltetrahydrofolate. Phe-541 contacts 5-amino-1-(5-phospho-beta-D-ribosyl)imidazole-4-carboxamide. Residues Asp-546 and 565–566 (SA) each bind (6R)-10-formyltetrahydrofolate. Arg-588 contributes to the 5-amino-1-(5-phospho-beta-D-ribosyl)imidazole-4-carboxamide binding site.

This sequence belongs to the PurH family. As to quaternary structure, homodimer. Associates with internalized INSR complexes on Golgi/endosomal membranes. Interacts with INSR; ATIC together with PRKAA2/AMPK2 and HACD3/PTPLAD1 is proposed to be part of a signaling network regulating INSR autophosphorylation and endocytosis.

The protein resides in the cytoplasm. It is found in the cytosol. The catalysed reaction is (6R)-10-formyltetrahydrofolate + 5-amino-1-(5-phospho-beta-D-ribosyl)imidazole-4-carboxamide = 5-formamido-1-(5-phospho-D-ribosyl)imidazole-4-carboxamide + (6S)-5,6,7,8-tetrahydrofolate. It carries out the reaction 10-formyldihydrofolate + 5-amino-1-(5-phospho-beta-D-ribosyl)imidazole-4-carboxamide = 5-formamido-1-(5-phospho-D-ribosyl)imidazole-4-carboxamide + 7,8-dihydrofolate. It catalyses the reaction IMP + H2O = 5-formamido-1-(5-phospho-D-ribosyl)imidazole-4-carboxamide. Its pathway is purine metabolism; IMP biosynthesis via de novo pathway; 5-formamido-1-(5-phospho-D-ribosyl)imidazole-4-carboxamide from 5-amino-1-(5-phospho-D-ribosyl)imidazole-4-carboxamide (10-formyl THF route): step 1/1. It participates in purine metabolism; IMP biosynthesis via de novo pathway; IMP from 5-formamido-1-(5-phospho-D-ribosyl)imidazole-4-carboxamide: step 1/1. Its activity is regulated as follows. AMP and XMP inhibit AICAR formyltransferase activity. Bifunctional enzyme that catalyzes the last two steps of purine biosynthesis. Acts as a transformylase that incorporates a formyl group to the AMP analog AICAR (5-amino-1-(5-phospho-beta-D-ribosyl)imidazole-4-carboxamide) to produce the intermediate formyl-AICAR (FAICAR). Can use both 10-formyldihydrofolate and 10-formyltetrahydrofolate as the formyl donor in this reaction. Also catalyzes the cyclization of FAICAR to inosine monophosphate (IMP). Promotes insulin receptor/INSR autophosphorylation and is involved in INSR internalization. This is Bifunctional purine biosynthesis protein ATIC (ATIC) from Pongo abelii (Sumatran orangutan).